Here is a 154-residue protein sequence, read N- to C-terminus: SsrA-binding protein (154 aa).

It belongs to the SmpB family.

The protein resides in the cytoplasm. Required for rescue of stalled ribosomes mediated by trans-translation. Binds to transfer-messenger RNA (tmRNA), required for stable association of tmRNA with ribosomes. tmRNA and SmpB together mimic tRNA shape, replacing the anticodon stem-loop with SmpB. tmRNA is encoded by the ssrA gene; the 2 termini fold to resemble tRNA(Ala) and it encodes a 'tag peptide', a short internal open reading frame. During trans-translation Ala-aminoacylated tmRNA acts like a tRNA, entering the A-site of stalled ribosomes, displacing the stalled mRNA. The ribosome then switches to translate the ORF on the tmRNA; the nascent peptide is terminated with the 'tag peptide' encoded by the tmRNA and targeted for degradation. The ribosome is freed to recommence translation, which seems to be the essential function of trans-translation. The sequence is that of SsrA-binding protein from Staphylococcus aureus (strain Mu3 / ATCC 700698).